A 142-amino-acid chain; its full sequence is Hemoglobin subunit alpha (142 aa).

Positions 2-142 (VLSPDDKKHV…VSTVLTSKYR (141 aa)) constitute a Globin domain. Position 4 is a phosphoserine (Ser-4). Lys-8 and Lys-12 each carry N6-succinyllysine. An N6-acetyllysine; alternate modification is found at Lys-17. At Lys-17 the chain carries N6-succinyllysine; alternate. A Phosphotyrosine modification is found at Tyr-25. At Ser-36 the chain carries Phosphoserine. An N6-succinyllysine modification is found at Lys-41. At Ser-50 the chain carries Phosphoserine. Position 59 (His-59) interacts with O2. His-88 contacts heme b. Ser-103 is modified (phosphoserine). At Thr-109 the chain carries Phosphothreonine. Residues Ser-125 and Ser-132 each carry the phosphoserine modification. A phosphothreonine mark is found at Thr-135 and Thr-138. Ser-139 carries the post-translational modification Phosphoserine.

It belongs to the globin family. Heterotetramer of two alpha chains and two beta chains. Red blood cells.

Functionally, involved in oxygen transport from the lung to the various peripheral tissues. In terms of biological role, hemopressin acts as an antagonist peptide of the cannabinoid receptor CNR1. Hemopressin-binding efficiently blocks cannabinoid receptor CNR1 and subsequent signaling. The polypeptide is Hemoglobin subunit alpha (HBA) (Papio anubis (Olive baboon)).